The chain runs to 132 residues: MQKKTIYFICTGNSCRSQMAEGFGKLILGDKWNVYSAGIETHGVNPHAIKAMKEVGIDISHHTSDLINNDILIASDIVVTLCSDADANCPVLPKNVTKEHWGFDDPAGKDWSEFQRVRDEIKAAIETFAHRV.

Catalysis depends on nucleophile residues Cys10, Cys82, and Cys89. Cystine bridges form between Cys10/Cys82 and Cys82/Cys89.

This sequence belongs to the low molecular weight phosphotyrosine protein phosphatase family. Thioredoxin-coupled ArsC subfamily.

Its subcellular location is the cytoplasm. It carries out the reaction arsenate + [thioredoxin]-dithiol + H(+) = arsenite + [thioredoxin]-disulfide + H2O. Its function is as follows. Catalyzes the reduction of arsenate [As(V)] to arsenite [As(III)]. In Staphylococcus epidermidis (strain ATCC 35984 / DSM 28319 / BCRC 17069 / CCUG 31568 / BM 3577 / RP62A), this protein is Arsenate reductase 1.